A 186-amino-acid polypeptide reads, in one-letter code: TATA-box-binding protein 2 (186 aa).

A run of 2 repeats spans residues 10–86 (IQNV…FDKL) and 101–179 (VQNI…VERI). Glycyl lysine isopeptide (Lys-Gly) (interchain with G-Cter in SAMP2) cross-links involve residues Lys53 and Lys63.

This sequence belongs to the TBP family.

General factor that plays a role in the activation of archaeal genes transcribed by RNA polymerase. Binds specifically to the TATA box promoter element which lies close to the position of transcription initiation. The sequence is that of TATA-box-binding protein 2 (tbp2) from Haloferax volcanii (strain ATCC 29605 / DSM 3757 / JCM 8879 / NBRC 14742 / NCIMB 2012 / VKM B-1768 / DS2) (Halobacterium volcanii).